We begin with the raw amino-acid sequence, 78 residues long: Keratin-associated protein 6-5 (78 aa).

A 25 X 2 AA repeats of G-[YCGS] region spans residues 3 to 76 (GYYGNYYGGR…GSGYGSGFGY (74 aa)).

This sequence belongs to the KRTAP type 6 family. As to quaternary structure, interacts with hair keratins. As to expression, strong expression in narrowly defined pattern restricted to the lower and middle cortical regions of the hair shaft in both developing and cycling hair. During hair follicle regression (catagen), expression levels decrease until expression is no longer detectable in follicles at resting stage (telogen).

In the hair cortex, hair keratin intermediate filaments are embedded in an interfilamentous matrix, consisting of hair keratin-associated proteins (KRTAP), which are essential for the formation of a rigid and resistant hair shaft through their extensive disulfide bond cross-linking with abundant cysteine residues of hair keratins. The matrix proteins include the high-sulfur and high-glycine-tyrosine keratins. The sequence is that of Keratin-associated protein 6-5 (Krtap6-5) from Mus musculus (Mouse).